Reading from the N-terminus, the 158-residue chain is GTP-dependent dephospho-CoA kinase (158 aa).

6 residues coordinate GTP: Asp35, Val36, Asp54, Lys56, Glu109, and Asp132.

It belongs to the GTP-dependent DPCK family.

It catalyses the reaction 3'-dephospho-CoA + GTP = GDP + CoA + H(+). Its pathway is cofactor biosynthesis; coenzyme A biosynthesis. In terms of biological role, catalyzes the GTP-dependent phosphorylation of the 3'-hydroxyl group of dephosphocoenzyme A to form coenzyme A (CoA). This Methanococcus maripaludis (strain DSM 14266 / JCM 13030 / NBRC 101832 / S2 / LL) protein is GTP-dependent dephospho-CoA kinase.